Consider the following 778-residue polypeptide: Endonuclease MutS2 (778 aa).

328–335 (GPNTGGKT) provides a ligand contact to ATP. The Smr domain occupies 702 to 777 (LDLRGKRYEE…GSGATIVTFK (76 aa)).

This sequence belongs to the DNA mismatch repair MutS family. MutS2 subfamily. Homodimer. Binds to stalled ribosomes, contacting rRNA.

Endonuclease that is involved in the suppression of homologous recombination and thus may have a key role in the control of bacterial genetic diversity. Its function is as follows. Acts as a ribosome collision sensor, splitting the ribosome into its 2 subunits. Detects stalled/collided 70S ribosomes which it binds and splits by an ATP-hydrolysis driven conformational change. Acts upstream of the ribosome quality control system (RQC), a ribosome-associated complex that mediates the extraction of incompletely synthesized nascent chains from stalled ribosomes and their subsequent degradation. Probably generates substrates for RQC. This is Endonuclease MutS2 from Streptococcus pneumoniae serotype 2 (strain D39 / NCTC 7466).